We begin with the raw amino-acid sequence, 230 residues long: uncharacterized protein (230 aa).

Val-10–Val-34 contributes to the NADP(+) binding site. Ser-139 contacts substrate. Tyr-152 functions as the Proton acceptor in the catalytic mechanism.

This sequence belongs to the short-chain dehydrogenases/reductases (SDR) family.

This is an uncharacterized protein from Staphylococcus epidermidis (strain ATCC 12228 / FDA PCI 1200).